The chain runs to 577 residues: Aspartate--tRNA(Asp/Asn) ligase (577 aa).

Residue Glu171 participates in L-aspartate binding. Residues 195–198 (QLFK) form an aspartate region. Residue Arg217 coordinates L-aspartate. Residues 217 to 219 (RDE) and Gln226 contribute to the ATP site. Residue His444 participates in L-aspartate binding. Glu474 contributes to the ATP binding site. An L-aspartate-binding site is contributed by Arg481. ATP is bound at residue 526-529 (GFDR).

The protein belongs to the class-II aminoacyl-tRNA synthetase family. Type 1 subfamily. As to quaternary structure, homodimer.

The protein localises to the cytoplasm. It catalyses the reaction tRNA(Asx) + L-aspartate + ATP = L-aspartyl-tRNA(Asx) + AMP + diphosphate. Aspartyl-tRNA synthetase with relaxed tRNA specificity since it is able to aspartylate not only its cognate tRNA(Asp) but also tRNA(Asn). Reaction proceeds in two steps: L-aspartate is first activated by ATP to form Asp-AMP and then transferred to the acceptor end of tRNA(Asp/Asn). This chain is Aspartate--tRNA(Asp/Asn) ligase, found in Helicobacter pylori (strain Shi470).